We begin with the raw amino-acid sequence, 500 residues long: Protein psiE (500 aa).

A signal peptide spans methionine 1–serine 18. Asparagine 59 is a glycosylation site (N-linked (GlcNAc...) asparagine). Positions threonine 114–aspartate 256 constitute a PA14 domain. Residues asparagine 314, asparagine 341, asparagine 366, asparagine 420, and asparagine 469 are each glycosylated (N-linked (GlcNAc...) asparagine).

The protein belongs to the prespore-cell-inducing factor family.

The protein localises to the secreted. In Dictyostelium discoideum (Social amoeba), this protein is Protein psiE (psiE).